The chain runs to 200 residues: Insulin, isoform 2 (200 aa).

The tract at residues 148–200 is disordered; the sequence is EVDSSPQPQGSESLPAQPPAQPAPQPEPQQAREPSPEVSCCGLWPRRPQRSQN. The span at 163 to 174 shows a compositional bias: pro residues; sequence AQPPAQPAPQPE. The span at 175–184 shows a compositional bias: low complexity; that stretch reads PQQAREPSPE.

As to expression, expressed in pancreas, eye and, to a lower extent, in limb.

The sequence is that of Insulin, isoform 2 (INS-IGF2) from Homo sapiens (Human).